A 488-amino-acid chain; its full sequence is Sterol 14-demethylase (488 aa).

Residues 12 to 32 (TGLVIVATLVIAKLIFSFFTS) traverse the membrane as a helical segment. Cysteine 433 is a binding site for heme.

This sequence belongs to the cytochrome P450 family. It depends on heme as a cofactor. As to expression, expressed in leaves, roots, stems, siliques, flowers, flower buds and seedlings.

It is found in the membrane. It catalyses the reaction a 14alpha-methyl steroid + 3 reduced [NADPH--hemoprotein reductase] + 3 O2 = a Delta(14) steroid + formate + 3 oxidized [NADPH--hemoprotein reductase] + 4 H2O + 4 H(+). Its function is as follows. Involved in sterol biosynthesis. Catalyzes the 14-alpha demethylation of obtusifoliol to 4 alpha-methyl-5 alpha-ergosta-8,14,24(28)-trien-3 beta-ol. The polypeptide is Sterol 14-demethylase (CYP51G1) (Arabidopsis thaliana (Mouse-ear cress)).